The sequence spans 177 residues: NAD(P)H-quinone oxidoreductase subunit 6, chloroplastic (177 aa).

5 helical membrane passes run 10 to 30 (VLLV…VLLT), 32 to 52 (PIYS…FYIL), 61 to 81 (AQLL…VMFM), 90 to 112 (FYLW…FSLI), and 152 to 172 (FYLP…GAIT).

Belongs to the complex I subunit 6 family. As to quaternary structure, NDH is composed of at least 16 different subunits, 5 of which are encoded in the nucleus.

The protein resides in the plastid. It localises to the chloroplast thylakoid membrane. The enzyme catalyses a plastoquinone + NADH + (n+1) H(+)(in) = a plastoquinol + NAD(+) + n H(+)(out). The catalysed reaction is a plastoquinone + NADPH + (n+1) H(+)(in) = a plastoquinol + NADP(+) + n H(+)(out). Its function is as follows. NDH shuttles electrons from NAD(P)H:plastoquinone, via FMN and iron-sulfur (Fe-S) centers, to quinones in the photosynthetic chain and possibly in a chloroplast respiratory chain. The immediate electron acceptor for the enzyme in this species is believed to be plastoquinone. Couples the redox reaction to proton translocation, and thus conserves the redox energy in a proton gradient. The polypeptide is NAD(P)H-quinone oxidoreductase subunit 6, chloroplastic (ndhG) (Acorus calamus var. americanus (American sweet flag)).